The sequence spans 304 residues: UDP-N-acetylenolpyruvoylglucosamine reductase (304 aa).

Residues 33–198 (RVGGPADILV…IEATVELESG (166 aa)) form the FAD-binding PCMH-type domain. Residue arginine 177 is part of the active site. Serine 227 serves as the catalytic Proton donor. Glutamate 297 is an active-site residue.

It belongs to the MurB family. Requires FAD as cofactor.

The protein localises to the cytoplasm. It carries out the reaction UDP-N-acetyl-alpha-D-muramate + NADP(+) = UDP-N-acetyl-3-O-(1-carboxyvinyl)-alpha-D-glucosamine + NADPH + H(+). The protein operates within cell wall biogenesis; peptidoglycan biosynthesis. Functionally, cell wall formation. In Clostridium perfringens (strain ATCC 13124 / DSM 756 / JCM 1290 / NCIMB 6125 / NCTC 8237 / Type A), this protein is UDP-N-acetylenolpyruvoylglucosamine reductase.